The primary structure comprises 123 residues: MKRQKRKQSITLIEMMVVITLIGIIGGALAFNMRGSIHKGKVFQSEQNCAKVYDILMMEYATGGSSLKEIIAHKETVVEEASWCKEGRKLLKDAWGEDLIVQLNDKGDDLVIFSKRVQSSNKK.

Residues 1–30 form the signal peptide; that stretch reads MKRQKRKQSITLIEMMVVITLIGIIGGALA.

Its subcellular location is the cell outer membrane. The sequence is that of Putative outer membrane protein CPn_0818/CP_1053/CPj0818/CpB0847 from Chlamydia pneumoniae (Chlamydophila pneumoniae).